A 157-amino-acid chain; its full sequence is MKESILDVLLYLFEHYFSEDADLVRDRDSLQNGLIQAGFSPAEISKAFDWLDALSEQRPSVARPHVDGPVRIYHGPELDKLDVDCRGFLLFLEQHRILDADQRELVLDRAMALDQDELDLDDLKWVVLMVLFNQPGAEAAYAWMETQMFLDEPESVH.

Belongs to the Smg family.

The protein is Protein Smg homolog of Xanthomonas euvesicatoria pv. vesicatoria (strain 85-10) (Xanthomonas campestris pv. vesicatoria).